The following is a 435-amino-acid chain: 5-methylthioadenosine/S-adenosylhomocysteine deaminase (435 aa).

Residues His-65 and His-67 each coordinate Zn(2+). Residues Glu-94, Arg-150, and His-189 each contribute to the substrate site. His-216 contributes to the Zn(2+) binding site. Substrate-binding residues include Glu-219 and Asp-304. Asp-304 contributes to the Zn(2+) binding site.

This sequence belongs to the metallo-dependent hydrolases superfamily. MTA/SAH deaminase family. Zn(2+) serves as cofactor.

The catalysed reaction is S-adenosyl-L-homocysteine + H2O + H(+) = S-inosyl-L-homocysteine + NH4(+). It carries out the reaction S-methyl-5'-thioadenosine + H2O + H(+) = S-methyl-5'-thioinosine + NH4(+). Catalyzes the deamination of 5-methylthioadenosine and S-adenosyl-L-homocysteine into 5-methylthioinosine and S-inosyl-L-homocysteine, respectively. Is also able to deaminate adenosine. The protein is 5-methylthioadenosine/S-adenosylhomocysteine deaminase of Bacillus anthracis (strain A0248).